A 171-amino-acid chain; its full sequence is MAELDIQISIEDIGWPGEETLLVFCERVLGAAAIYLRDNEKQPFPKMPPEVSLVFTDDASIQDINAEWRGKDKPTNVLSFPAFPVQRGKVPGPMLGDIIIARETVEREAQELEKSFDDHLTHLLVHGFLHLLGYDHMNNAEAETMEGLETRILAQLGLSDPYEGQDLKMEP.

Residues His-126, His-130, and His-136 each coordinate Zn(2+).

This sequence belongs to the endoribonuclease YbeY family. Zn(2+) serves as cofactor.

The protein resides in the cytoplasm. Its function is as follows. Single strand-specific metallo-endoribonuclease involved in late-stage 70S ribosome quality control and in maturation of the 3' terminus of the 16S rRNA. This Rhizobium etli (strain ATCC 51251 / DSM 11541 / JCM 21823 / NBRC 15573 / CFN 42) protein is Endoribonuclease YbeY.